Consider the following 206-residue polypeptide: Phosphoserine phosphatase (206 aa).

D7 acts as the Nucleophile in catalysis. The Mg(2+) site is built by D7 and D9. D9 functions as the Proton donor in the catalytic mechanism. Substrate is bound by residues E16, R52, 95–96 (SG), and K140. Residue D163 participates in Mg(2+) binding. N166 contributes to the substrate binding site.

This sequence belongs to the HAD-like hydrolase superfamily. SerB family. The cofactor is Mg(2+).

It carries out the reaction O-phospho-L-serine + H2O = L-serine + phosphate. It catalyses the reaction O-phospho-D-serine + H2O = D-serine + phosphate. Its pathway is amino-acid biosynthesis; L-serine biosynthesis; L-serine from 3-phospho-D-glycerate: step 3/3. The polypeptide is Phosphoserine phosphatase (Wolinella succinogenes (strain ATCC 29543 / DSM 1740 / CCUG 13145 / JCM 31913 / LMG 7466 / NCTC 11488 / FDC 602W) (Vibrio succinogenes)).